The following is a 93-amino-acid chain: SNTRNFVLRDEEGNEHGVFTGKQPRQAALKAANRGDGTKSNPDVIRLRERGTKKVHVFKAWKEMVEAPKNRPDWMPEKISKPFVKKEKIEKIE.

Positions 1–43 are disordered; it reads SNTRNFVLRDEEGNEHGVFTGKQPRQAALKAANRGDGTKSNPD.

Functionally, protects DNA against thermal denaturation and modulates transcription. This is Chromosomal protein MC1 from Methanosarcina barkeri.